Reading from the N-terminus, the 34-residue chain is Photosystem II reaction center protein M (34 aa).

A helical membrane pass occupies residues 5–25; the sequence is ILAFIATTLFVLVPTAFLLII.

It belongs to the PsbM family. In terms of assembly, PSII is composed of 1 copy each of membrane proteins PsbA, PsbB, PsbC, PsbD, PsbE, PsbF, PsbH, PsbI, PsbJ, PsbK, PsbL, PsbM, PsbT, PsbX, PsbY, PsbZ, Psb30/Ycf12, at least 3 peripheral proteins of the oxygen-evolving complex and a large number of cofactors. It forms dimeric complexes.

The protein resides in the plastid. Its subcellular location is the chloroplast thylakoid membrane. Functionally, one of the components of the core complex of photosystem II (PSII). PSII is a light-driven water:plastoquinone oxidoreductase that uses light energy to abstract electrons from H(2)O, generating O(2) and a proton gradient subsequently used for ATP formation. It consists of a core antenna complex that captures photons, and an electron transfer chain that converts photonic excitation into a charge separation. This subunit is found at the monomer-monomer interface. The protein is Photosystem II reaction center protein M of Citrus sinensis (Sweet orange).